The sequence spans 256 residues: Ribosomal RNA small subunit methyltransferase A (256 aa).

The S-adenosyl-L-methionine site is built by Asn-12, Leu-14, Gly-39, Glu-60, Asp-85, and Asn-103.

Belongs to the class I-like SAM-binding methyltransferase superfamily. rRNA adenine N(6)-methyltransferase family. RsmA subfamily.

It localises to the cytoplasm. The catalysed reaction is adenosine(1518)/adenosine(1519) in 16S rRNA + 4 S-adenosyl-L-methionine = N(6)-dimethyladenosine(1518)/N(6)-dimethyladenosine(1519) in 16S rRNA + 4 S-adenosyl-L-homocysteine + 4 H(+). Specifically dimethylates two adjacent adenosines (A1518 and A1519) in the loop of a conserved hairpin near the 3'-end of 16S rRNA in the 30S particle. May play a critical role in biogenesis of 30S subunits. The chain is Ribosomal RNA small subunit methyltransferase A from Legionella pneumophila (strain Lens).